Reading from the N-terminus, the 215-residue chain is Nascent polypeptide-associated complex subunit alpha (215 aa).

The interval 1–81 is disordered; sequence MPGEATETVP…SEKKARKAMS (81 aa). The span at 9–28 shows a compositional bias: polar residues; that stretch reads VPATEQELPQPQAETGSGTE. Over residues 29–42 the composition is skewed to acidic residues; that stretch reads SDSDESVPELEEQD. At Ser-43 the chain carries Phosphoserine; by ILK1. A compositionally biased stretch (low complexity) spans 44-57; sequence TQATTQQAQLAAAA. The segment at 69-80 is required for DNA-binding; that stretch reads QSRSEKKARKAM. Residues 70-135 enclose the NAC-A/B domain; it reads SRSEKKARKA…AKIEDLSQQA (66 aa). The tract at residues 93–108 is RNA/DNA-binding; the sequence is RVTIRKSKNILFVITK. Ser-132 carries the phosphoserine modification. At Lys-142 the chain carries N6-acetyllysine; alternate. A Glycyl lysine isopeptide (Lys-Gly) (interchain with G-Cter in SUMO2); alternate cross-link involves residue Lys-142. At Thr-159 the chain carries Phosphothreonine; by GSK3-beta. A Phosphothreonine modification is found at Thr-161. A phosphoserine mark is found at Ser-166, Ser-186, Ser-191, and Ser-203. Residues 176-213 enclose the UBA domain; it reads VEVKDIELVMSQANVSRAKAVRALKNNSNDIVNAIMEL.

The protein belongs to the NAC-alpha family. As to quaternary structure, interacts with TBP and JUN. Part of the nascent polypeptide-associated complex (NAC), which is a heterodimer of NACA and BTF3 (via NAC-A/B domains). NAC associates with ribosomes through the BTF3/NACB subunit and contacts the ribosomal protein L23, which is positioned near the exiting site. Both subunits can contact nascent polypeptide chains. NACA may also form homodimers, and only this form binds DNA. In terms of processing, phosphorylation of Thr-159 by GSK3B may promote proteasome mediated degradation. Phosphorylation of Ser-43 by ILK during cell adhesion may promote nuclear localization. As to expression, ubiquitously expressed.

Its subcellular location is the cytoplasm. The protein resides in the nucleus. Functionally, prevents inappropriate targeting of non-secretory polypeptides to the endoplasmic reticulum (ER). Binds to nascent polypeptide chains as they emerge from the ribosome and blocks their interaction with the signal recognition particle (SRP), which normally targets nascent secretory peptides to the ER. Also reduces the inherent affinity of ribosomes for protein translocation sites in the ER membrane (M sites). May act as a specific coactivator for JUN, binding to DNA and stabilizing the interaction of JUN homodimers with target gene promoters. The protein is Nascent polypeptide-associated complex subunit alpha (NACA) of Homo sapiens (Human).